We begin with the raw amino-acid sequence, 289 residues long: Glucosamine-6-phosphate deaminase 1 (289 aa).

Lys-64 is subject to N6-acetyllysine. Asp-72 (proton acceptor; for enolization step) is an active-site residue. Asp-141 (for ring-opening step) is an active-site residue. His-143 acts as the Proton acceptor; for ring-opening step in catalysis. Glu-148 acts as the For ring-opening step in catalysis. Thr-161 is subject to Phosphothreonine.

It belongs to the glucosamine/galactosamine-6-phosphate isomerase family. Homohexamer.

It localises to the cytoplasm. It carries out the reaction alpha-D-glucosamine 6-phosphate + H2O = beta-D-fructose 6-phosphate + NH4(+). The protein operates within nucleotide-sugar biosynthesis; UDP-N-acetyl-alpha-D-glucosamine biosynthesis; alpha-D-glucosamine 6-phosphate from D-fructose 6-phosphate: step 1/1. Its activity is regulated as follows. Allosterically activated by N-acetylglucosamine-6-phosphate (GlcNAc6P). Functionally, catalyzes the reversible conversion of alpha-D-glucosamine 6-phosphate (GlcN-6P) into beta-D-fructose 6-phosphate (Fru-6P) and ammonium ion, a regulatory reaction step in de novo uridine diphosphate-N-acetyl-alpha-D-glucosamine (UDP-GlcNAc) biosynthesis via hexosamine pathway. Deamination is coupled to aldo-keto isomerization mediating the metabolic flux from UDP-GlcNAc toward Fru-6P. At high ammonium level can drive amination and isomerization of Fru-6P toward hexosamines and UDP-GlcNAc synthesis. Has a role in fine tuning the metabolic fluctuations of cytosolic UDP-GlcNAc and their effects on hyaluronan synthesis that occur during tissue remodeling. Seems to trigger calcium oscillations in mammalian eggs. These oscillations serve as the essential trigger for egg activation and early development of the embryo. In Homo sapiens (Human), this protein is Glucosamine-6-phosphate deaminase 1.